Reading from the N-terminus, the 487-residue chain is Probable glycine dehydrogenase (decarboxylating) subunit 2 (487 aa).

K273 is modified (N6-(pyridoxal phosphate)lysine).

It belongs to the GcvP family. C-terminal subunit subfamily. As to quaternary structure, the glycine cleavage system is composed of four proteins: P, T, L and H. In this organism, the P 'protein' is a heterodimer of two subunits. Pyridoxal 5'-phosphate serves as cofactor.

The enzyme catalyses N(6)-[(R)-lipoyl]-L-lysyl-[glycine-cleavage complex H protein] + glycine + H(+) = N(6)-[(R)-S(8)-aminomethyldihydrolipoyl]-L-lysyl-[glycine-cleavage complex H protein] + CO2. In terms of biological role, the glycine cleavage system catalyzes the degradation of glycine. The P protein binds the alpha-amino group of glycine through its pyridoxal phosphate cofactor; CO(2) is released and the remaining methylamine moiety is then transferred to the lipoamide cofactor of the H protein. This is Probable glycine dehydrogenase (decarboxylating) subunit 2 from Lysinibacillus sphaericus (strain C3-41).